The sequence spans 984 residues: Mediator of RNA polymerase II transcription subunit 5 (984 aa).

Belongs to the Mediator complex subunit 5 family. As to quaternary structure, component of the Mediator complex.

The protein localises to the nucleus. Component of the Mediator complex, a coactivator involved in the regulated transcription of nearly all RNA polymerase II-dependent genes. Mediator functions as a bridge to convey information from gene-specific regulatory proteins to the basal RNA polymerase II transcription machinery. Mediator is recruited to promoters by direct interactions with regulatory proteins and serves as a scaffold for the assembly of a functional preinitiation complex with RNA polymerase II and the general transcription factors. The sequence is that of Mediator of RNA polymerase II transcription subunit 5 (NUT1) from Phaeosphaeria nodorum (strain SN15 / ATCC MYA-4574 / FGSC 10173) (Glume blotch fungus).